Here is a 326-residue protein sequence, read N- to C-terminus: Immune-associated nucleotide-binding protein 4 (326 aa).

The AIG1-type G domain maps to 17 to 225 (EPIKNIVLVG…FTDEMHRKIQ (209 aa)). The G1 stretch occupies residues 26–33 (GRTGNGKS). Residues 26-34 (GRTGNGKSA) and Ser-47 each bind GTP. Positions 53 to 57 (GVTMK) are G2. The segment at 75-78 (DTPG) is G3. Positions 145-148 (TGGD) are G4. The interval 184–186 (DNR) is G5. Asn-185 contacts GTP. The stretch at 217–241 (TDEMHRKIQKEAETLREQQKEVESK) forms a coiled coil.

Belongs to the TRAFAC class TrmE-Era-EngA-EngB-Septin-like GTPase superfamily. AIG1/Toc34/Toc159-like paraseptin GTPase family. IAN subfamily. In terms of tissue distribution, expressed in radicles of the germinating seeds.

In Arabidopsis thaliana (Mouse-ear cress), this protein is Immune-associated nucleotide-binding protein 4.